We begin with the raw amino-acid sequence, 244 residues long: Proteasome subunit alpha 2 (244 aa).

This sequence belongs to the peptidase T1A family. The 20S proteasome core is composed of 14 alpha and 14 beta subunits that assemble into four stacked heptameric rings, resulting in a barrel-shaped structure. The two inner rings, each composed of seven catalytic beta subunits, are sandwiched by two outer rings, each composed of seven alpha subunits. The catalytic chamber with the active sites is on the inside of the barrel. Has a gated structure, the ends of the cylinder being occluded by the N-termini of the alpha-subunits. Is capped at one or both ends by the proteasome regulatory ATPase, PAN.

The protein localises to the cytoplasm. The formation of the proteasomal ATPase PAN-20S proteasome complex, via the docking of the C-termini of PAN into the intersubunit pockets in the alpha-rings, triggers opening of the gate for substrate entry. Interconversion between the open-gate and close-gate conformations leads to a dynamic regulation of the 20S proteasome proteolysis activity. Its function is as follows. Component of the proteasome core, a large protease complex with broad specificity involved in protein degradation. This Haloarcula marismortui (strain ATCC 43049 / DSM 3752 / JCM 8966 / VKM B-1809) (Halobacterium marismortui) protein is Proteasome subunit alpha 2.